The sequence spans 319 residues: Cytochrome f (319 aa).

The signal sequence occupies residues Met-1–Ala-35. Residues Phe-36, Cys-56, Cys-59, and His-60 each coordinate heme. A helical membrane pass occupies residues Ile-285–Lys-305.

Belongs to the cytochrome f family. The 4 large subunits of the cytochrome b6-f complex are cytochrome b6, subunit IV (17 kDa polypeptide, petD), cytochrome f and the Rieske protein, while the 4 small subunits are PetG, PetL, PetM and PetN. The complex functions as a dimer. Heme is required as a cofactor.

It is found in the plastid. The protein resides in the chloroplast thylakoid membrane. In terms of biological role, component of the cytochrome b6-f complex, which mediates electron transfer between photosystem II (PSII) and photosystem I (PSI), cyclic electron flow around PSI, and state transitions. In Staurastrum punctulatum (Green alga), this protein is Cytochrome f.